A 501-amino-acid polypeptide reads, in one-letter code: Solute carrier family 2, facilitated glucose transporter member 5 (501 aa).

Met-1 is modified (N-acetylmethionine). Residues 1-18 (MEQQDPIKKEGRLTPVLA) lie on the Cytoplasmic side of the membrane. The helical transmembrane segment at 19-39 (LATLIAAFGSSFQYGYNVAAV) threads the bilayer. Tyr-32 contacts D-fructose. Residues 40–68 (NSPAELMKAFYNETHYSRFSEYISEFSLT) lie on the Extracellular side of the membrane. Asn-51 carries an N-linked (GlcNAc...) asparagine glycan. Residues 69–91 (LLWSISVSMFPFGGFVGSLMVGP) form a helical membrane-spanning segment. Over 92–98 (LVNRLGR) the chain is Cytoplasmic. Residues 99 to 119 (KGTLLFNNIFSIVPAILMGTS) traverse the membrane as a helical segment. The Extracellular portion of the chain corresponds to 120–126 (KTARSYE). Residues 127–149 (MIILSRLLVGICAGLSSNVVPMY) traverse the membrane as a helical segment. Residues 150 to 161 (LGELSPKNLRGA) are Cytoplasmic-facing. A helical transmembrane segment spans residues 162-182 (LGVVPQLFITVGILVAQIVGL). Gln-167 is a D-fructose binding site. The Extracellular portion of the chain corresponds to 183-192 (RSLLATEEGW). The chain crosses the membrane as a helical span at residues 193 to 213 (PILLGLTAIPAALQLLLLPFF). The Cytoplasmic segment spans residues 214-277 (PESPRYLLIQ…MFRMRSLRWQ (64 aa)). The chain crosses the membrane as a helical span at residues 278–298 (VISIIILMGGQQLSGVNAIYY). D-fructose is bound by residues Gln-288 and 296–298 (IYY). Topologically, residues 299–313 (YADQIYLSAGVKDQD) are extracellular. A helical transmembrane segment spans residues 314 to 334 (VQYVTVGTGAVNVLMTICAVF). The Cytoplasmic segment spans residues 335–342 (VVEYLGRR). A helical transmembrane segment spans residues 343-363 (ALLLLGFSVCFIACCVLTVAL). The Extracellular segment spans residues 364–371 (ALQDRVSW). The chain crosses the membrane as a helical span at residues 372–394 (MPYISIVCVISYVIGHALGPSPI). A D-fructose-binding site is contributed by His-387. The Cytoplasmic portion of the chain corresponds to 395 to 412 (PALLITEVFLQSSRSAAY). Residues 413–433 (MVGGTVHWLSNFAVGLVFPFI) form a helical membrane-spanning segment. Residue 419 to 420 (HW) coordinates D-fructose. The Extracellular portion of the chain corresponds to 434–439 (QVGLGA). A helical transmembrane segment spans residues 440–460 (YSFIIFAVICLLTTIYIFLIV). Residues 461–501 (PETKGKTFVEINHIFTKMNKVSDVHPAKDELKDIPLSAVEL) lie on the Cytoplasmic side of the membrane.

This sequence belongs to the major facilitator superfamily. Sugar transporter (TC 2.A.1.1) family. Glucose transporter subfamily.

Its subcellular location is the apical cell membrane. The protein resides in the cell membrane. It localises to the sarcolemma. It catalyses the reaction D-fructose(out) = D-fructose(in). In terms of biological role, functions as a fructose transporter that has only low activity with other monosaccharides. Can mediate the uptake of deoxyglucose, but with low efficiency. Essential for fructose uptake in the small intestine. Plays a role in the regulation of salt uptake and blood pressure in response to dietary fructose. Required for the development of high blood pressure in response to high dietary fructose intake. The chain is Solute carrier family 2, facilitated glucose transporter member 5 from Equus caballus (Horse).